Reading from the N-terminus, the 591-residue chain is Putative BTB/POZ domain-containing protein At5g13600 (591 aa).

Residues 28-95 form the BTB domain; it reads PDVMIQVVDE…CYGVRIEVTP (68 aa). The NPH3 domain maps to 208–493; that stretch reads NWWFNDVSSF…VQVLFFEQMR (286 aa). Tyr434 is modified (phosphotyrosine).

It belongs to the NPH3 family.

Its pathway is protein modification; protein ubiquitination. In terms of biological role, may act as a substrate-specific adapter of an E3 ubiquitin-protein ligase complex (CUL3-RBX1-BTB) which mediates the ubiquitination and subsequent proteasomal degradation of target proteins. This chain is Putative BTB/POZ domain-containing protein At5g13600, found in Arabidopsis thaliana (Mouse-ear cress).